The sequence spans 753 residues: 5-methyltetrahydropteroyltriglutamate--homocysteine methyltransferase (753 aa).

Residues Arg-17–Lys-20 and Lys-117 each bind 5-methyltetrahydropteroyltri-L-glutamate. L-homocysteine is bound by residues Ile-431–Ser-433 and Glu-484. Residues Ile-431–Ser-433 and Glu-484 contribute to the L-methionine site. 5-methyltetrahydropteroyltri-L-glutamate contacts are provided by residues Arg-515–Cys-516 and Trp-561. L-homocysteine is bound at residue Asp-599. An L-methionine-binding site is contributed by Asp-599. Glu-605 lines the 5-methyltetrahydropteroyltri-L-glutamate pocket. His-641, Cys-643, and Glu-665 together coordinate Zn(2+). His-694 acts as the Proton donor in catalysis. Cys-726 lines the Zn(2+) pocket.

It belongs to the vitamin-B12 independent methionine synthase family. It depends on Zn(2+) as a cofactor.

The enzyme catalyses 5-methyltetrahydropteroyltri-L-glutamate + L-homocysteine = tetrahydropteroyltri-L-glutamate + L-methionine. It functions in the pathway amino-acid biosynthesis; L-methionine biosynthesis via de novo pathway; L-methionine from L-homocysteine (MetE route): step 1/1. In terms of biological role, catalyzes the transfer of a methyl group from 5-methyltetrahydrofolate to homocysteine resulting in methionine formation. The sequence is that of 5-methyltetrahydropteroyltriglutamate--homocysteine methyltransferase from Escherichia coli O157:H7.